We begin with the raw amino-acid sequence, 121 residues long: UPF0344 protein BC_1150 (121 aa).

4 helical membrane passes run 6–26 (ITAW…YSAG), 38–58 (LMYI…VKTA), 65–85 (WYGL…MVLV), and 92–112 (PTGA…YLGL).

It belongs to the UPF0344 family.

It is found in the cell membrane. The sequence is that of UPF0344 protein BC_1150 from Bacillus cereus (strain ATCC 14579 / DSM 31 / CCUG 7414 / JCM 2152 / NBRC 15305 / NCIMB 9373 / NCTC 2599 / NRRL B-3711).